Consider the following 206-residue polypeptide: Adenine phosphoribosyltransferase (206 aa).

It belongs to the purine/pyrimidine phosphoribosyltransferase family. As to quaternary structure, homodimer.

The protein localises to the cytoplasm. It carries out the reaction AMP + diphosphate = 5-phospho-alpha-D-ribose 1-diphosphate + adenine. It participates in purine metabolism; AMP biosynthesis via salvage pathway; AMP from adenine: step 1/1. In terms of biological role, catalyzes a salvage reaction resulting in the formation of AMP, that is energically less costly than de novo synthesis. This chain is Adenine phosphoribosyltransferase, found in Burkholderia mallei (strain NCTC 10229).